Here is a 791-residue protein sequence, read N- to C-terminus: Endonuclease MutS2 (791 aa).

Position 339-346 (339-346) interacts with ATP; the sequence is GPNTGGKT. The Smr domain maps to 715–790; that stretch reads LDLRGERYET…GSGVTIADLK (76 aa).

This sequence belongs to the DNA mismatch repair MutS family. MutS2 subfamily. Homodimer. Binds to stalled ribosomes, contacting rRNA.

In terms of biological role, endonuclease that is involved in the suppression of homologous recombination and thus may have a key role in the control of bacterial genetic diversity. Its function is as follows. Acts as a ribosome collision sensor, splitting the ribosome into its 2 subunits. Detects stalled/collided 70S ribosomes which it binds and splits by an ATP-hydrolysis driven conformational change. Acts upstream of the ribosome quality control system (RQC), a ribosome-associated complex that mediates the extraction of incompletely synthesized nascent chains from stalled ribosomes and their subsequent degradation. Probably generates substrates for RQC. The sequence is that of Endonuclease MutS2 from Halothermothrix orenii (strain H 168 / OCM 544 / DSM 9562).